Here is a 145-residue protein sequence, read N- to C-terminus: Small ribosomal subunit protein uS15 (145 aa).

Belongs to the universal ribosomal protein uS15 family. As to quaternary structure, part of the 30S ribosomal subunit.

This Thermoplasma acidophilum (strain ATCC 25905 / DSM 1728 / JCM 9062 / NBRC 15155 / AMRC-C165) protein is Small ribosomal subunit protein uS15.